The chain runs to 119 residues: Holo-[acyl-carrier-protein] synthase (119 aa).

Residues Asp8 and Glu58 each coordinate Mg(2+).

It belongs to the P-Pant transferase superfamily. AcpS family. Requires Mg(2+) as cofactor.

Its subcellular location is the cytoplasm. The catalysed reaction is apo-[ACP] + CoA = holo-[ACP] + adenosine 3',5'-bisphosphate + H(+). In terms of biological role, transfers the 4'-phosphopantetheine moiety from coenzyme A to a Ser of acyl-carrier-protein. The polypeptide is Holo-[acyl-carrier-protein] synthase (Bacillus cereus (strain ATCC 14579 / DSM 31 / CCUG 7414 / JCM 2152 / NBRC 15305 / NCIMB 9373 / NCTC 2599 / NRRL B-3711)).